A 179-amino-acid polypeptide reads, in one-letter code: ATP synthase subunit delta (179 aa).

The protein belongs to the ATPase delta chain family. In terms of assembly, F-type ATPases have 2 components, F(1) - the catalytic core - and F(0) - the membrane proton channel. F(1) has five subunits: alpha(3), beta(3), gamma(1), delta(1), epsilon(1). F(0) has three main subunits: a(1), b(2) and c(10-14). The alpha and beta chains form an alternating ring which encloses part of the gamma chain. F(1) is attached to F(0) by a central stalk formed by the gamma and epsilon chains, while a peripheral stalk is formed by the delta and b chains.

Its subcellular location is the cell inner membrane. In terms of biological role, f(1)F(0) ATP synthase produces ATP from ADP in the presence of a proton or sodium gradient. F-type ATPases consist of two structural domains, F(1) containing the extramembraneous catalytic core and F(0) containing the membrane proton channel, linked together by a central stalk and a peripheral stalk. During catalysis, ATP synthesis in the catalytic domain of F(1) is coupled via a rotary mechanism of the central stalk subunits to proton translocation. This protein is part of the stalk that links CF(0) to CF(1). It either transmits conformational changes from CF(0) to CF(1) or is implicated in proton conduction. This Burkholderia thailandensis (strain ATCC 700388 / DSM 13276 / CCUG 48851 / CIP 106301 / E264) protein is ATP synthase subunit delta.